A 461-amino-acid polypeptide reads, in one-letter code: Propionyl-CoA carboxylase regulator (461 aa).

The HTH cro/C1-type domain maps to 11–65 (LRELRVKLGLTQKVFAERLGASLPYLNQMENNHRPVSATVVLALAQEFGVDVTKL). A DNA-binding region (H-T-H motif) is located at residues 22–41 (QKVFAERLGASLPYLNQMEN).

Belongs to the short-chain fatty acyl-CoA assimilation regulator (ScfR) family.

Transcriptional regulator that controls propionyl-CoA assimilation through the methylmalonyl-CoA pathway via regulation of pccB expression. This Cereibacter sphaeroides (strain ATCC 17023 / DSM 158 / JCM 6121 / CCUG 31486 / LMG 2827 / NBRC 12203 / NCIMB 8253 / ATH 2.4.1.) (Rhodobacter sphaeroides) protein is Propionyl-CoA carboxylase regulator.